Consider the following 287-residue polypeptide: MLPATFKLCAGISYRHMRNMTGLRKNAMVAIHHELNMLAGPNPSSWISHVRRRSSLLSSRIEEEQGYNEAEVSYVKQGEEALQKSISILGDQDGWTTEIIAANGDKVLSKVLPDVGKVFKLEVLLDQRSDNLYVELVGNMEQMGDWNPNVKEVKILQKIGQETMVTHEVSGPTPGNVVGPRDFVSVRCAKRRGSTCFLAGMSTQHPTMPEQRGVVRAENGPTCIVMRPSADDPNKTKFTWLLSIDLKGWIPKTIINKVLSQTQVDFANHLRQRMADNSVSMEMAAAC.

The N-terminal 61 residues, 1-61, are a transit peptide targeting the mitochondrion; the sequence is MLPATFKLCA…RRSSLLSSRI (61 aa). An START domain is found at 66-279; that stretch reads GYNEAEVSYV…LRQRMADNSV (214 aa).

In terms of assembly, may interact with TSPO.

It localises to the mitochondrion. The catalysed reaction is cholesterol(in) = cholesterol(out). The protein operates within steroid metabolism; cholesterol metabolism. Plays a key role in steroid hormone synthesis by enhancing the metabolism of cholesterol into pregnenolone. Mediates the transfer of cholesterol from the outer mitochondrial membrane to the inner mitochondrial membrane where it is cleaved to pregnenolone. The protein is Steroidogenic acute regulatory protein, mitochondrial (star) of Oncorhynchus mykiss (Rainbow trout).